Here is a 404-residue protein sequence, read N- to C-terminus: Epoxide hydrolase 1 (404 aa).

A helical transmembrane segment spans residues 74 to 96 (ILVRLLQFYYFVKFSAILFLGFA). An AB hydrolase-1 domain is found at 140–389 (PLMLFIHGYP…ASHWVQQDEP (250 aa)). The active-site Nucleophile is aspartate 215. The Proton donor role is filled by tyrosine 327. Catalysis depends on histidine 382, which acts as the Proton acceptor.

The protein belongs to the AB hydrolase superfamily. Epoxide hydrolase family.

It localises to the membrane. It carries out the reaction an epoxide + H2O = an ethanediol. The enzyme catalyses 8,9-epoxy-(5Z,11Z,14Z)-eicosatrienoate + H2O = 8,9-dihydroxy-(5Z,11Z,14Z)-eicosatrienoate. The catalysed reaction is 11,12-epoxy-(5Z,8Z,14Z)-eicosatrienoate + H2O = 11,12-dihydroxy-(5Z,8Z,14Z)-eicosatrienoate. It catalyses the reaction 14,15-epoxy-(5Z,8Z,11Z)-eicosatrienoate + H2O = 14,15-dihydroxy-(5Z,8Z,11Z)-eicosatrienoate. It carries out the reaction 12,13-epoxy-(9Z)-octadecenoate + H2O = 12,13-dihydroxy-(9Z)-octadecenoate. The enzyme catalyses 9,10-epoxy-(12Z)-octadecenoate + H2O = 9,10-dihydroxy-(12Z)-octadecenoate. The protein operates within lipid metabolism. Its function is as follows. Catalyzes the hydrolysis of epoxide-containing fatty acids. Active against epoxyeicosatrienoic acids (EETs) including 8,9-epoxy-(5Z,11Z,14Z)-eicosatrienoate (8,9-EET), 11,12-epoxy-(5Z,8Z,14Z)-eicosatrienoate (11,12-EET) and 14,15-epoxy-(5Z,8Z,11Z)-eicosatrienoate (14,15-EET) and the linoleic acid metabolites 12,13-epoxy-(9Z)-octadecenoate (12,13-EpOME) and 9,10-epoxy-(12Z)-octadecenoate (9,10-EpOME). These epoxides function as lipid signaling molecules, the enzyme can deplete the supply of the epoxide signal by transforming them into diol species that are more readily eliminated through excretion. This is Epoxide hydrolase 1 from Caenorhabditis elegans.